A 114-amino-acid polypeptide reads, in one-letter code: Chaperone protein YscY (114 aa).

In terms of assembly, binds to YscX.

The protein resides in the cytoplasm. In terms of biological role, required for Yop secretion. Functions probably as a chaperone which stabilizes YscX within the cell, before its secretion. In Yersinia enterocolitica, this protein is Chaperone protein YscY (yscY).